The chain runs to 174 residues: Tat proofreading chaperone TtrD (174 aa).

It belongs to the TorD/DmsD family. As to quaternary structure, monomer.

The protein localises to the cytoplasm. Functionally, binds specifically to the Tat signal peptide of the TtrA subunit of the tetrathionate reductase. This is Tat proofreading chaperone TtrD (ttrD) from Archaeoglobus fulgidus (strain ATCC 49558 / DSM 4304 / JCM 9628 / NBRC 100126 / VC-16).